We begin with the raw amino-acid sequence, 83 residues long: Probable calcium-binding protein CML28 (83 aa).

EF-hand domains are found at residues 5–40 and 43–75; these read TEKA…LGSV and EDIK…NRGL. Positions 18, 20, 22, 24, 29, 53, 55, 57, 59, and 64 each coordinate Ca(2+).

Potential calcium sensor. The polypeptide is Probable calcium-binding protein CML28 (CML28) (Arabidopsis thaliana (Mouse-ear cress)).